We begin with the raw amino-acid sequence, 228 residues long: Ephrin-A5 (228 aa).

The first 20 residues, 1 to 20, serve as a signal peptide directing secretion; that stretch reads MLHVEMLTLLFLVLWMCVFS. Residues 29-162 enclose the Ephrin RBD domain; it reads ADRYAVYWNS…KLKVFVRPTN (134 aa). N-linked (GlcNAc...) asparagine glycosylation is present at Asn-37. 2 disulfides stabilise this stretch: Cys-62/Cys-102 and Cys-90/Cys-151. N-linked (GlcNAc...) asparagine; atypical glycosylation is present at Asn-162. Positions 186 to 205 are disordered; the sequence is EPADDTVHESAEPSRGENAA. Basic and acidic residues predominate over residues 190 to 200; that stretch reads DTVHESAEPSR. The GPI-anchor amidated asparagine moiety is linked to residue Asn-203. Residues 204-228 constitute a propeptide, removed in mature form; it reads AAQTPRIPSRLLAILLFLLAMLLTL.

Belongs to the ephrin family. In terms of assembly, binds to the receptor tyrosine kinases EPHA2, EPHA3 and EPHB1. Forms a ternary EFNA5-EPHA3-ADAM10 complex mediating EFNA5 extracellular domain shedding by ADAM10 which regulates the EFNA5-EPHA3 complex internalization and function. Binds to EPHB2. Interacts with EPHA8; activates EPHA8. In terms of tissue distribution, expressed in myogenic progenitor cells.

The protein resides in the cell membrane. The protein localises to the membrane. Its subcellular location is the caveola. Its function is as follows. Cell surface GPI-bound ligand for Eph receptors, a family of receptor tyrosine kinases which are crucial for migration, repulsion and adhesion during neuronal, vascular and epithelial development. Binds promiscuously Eph receptors residing on adjacent cells, leading to contact-dependent bidirectional signaling into neighboring cells. The signaling pathway downstream of the receptor is referred to as forward signaling while the signaling pathway downstream of the ephrin ligand is referred to as reverse signaling. Induces compartmentalized signaling within a caveolae-like membrane microdomain when bound to the extracellular domain of its cognate receptor. This signaling event requires the activity of the Fyn tyrosine kinase. Activates the EPHA3 receptor to regulate cell-cell adhesion and cytoskeletal organization. With the receptor EPHA2 may regulate lens fiber cells shape and interactions and be important for lens transparency maintenance. May function actively to stimulate axon fasciculation. The interaction of EFNA5 with EPHA5 also mediates communication between pancreatic islet cells to regulate glucose-stimulated insulin secretion. Cognate/functional ligand for EPHA7, their interaction regulates brain development modulating cell-cell adhesion and repulsion. This is Ephrin-A5 (Efna5) from Mus musculus (Mouse).